The chain runs to 743 residues: Zinc transporter ZIP6 (743 aa).

The N-terminal stretch at 1 to 20 is a signal peptide; sequence MARKLSVILILTFALSVTNP. Residues 21 to 313 lie on the Extracellular side of the membrane; that stretch reads LHELKAAAFP…PKTYSLQIAW (293 aa). An N-linked (GlcNAc...) asparagine glycan is attached at Asn-67. Over residues 96–116 the composition is skewed to basic and acidic residues; it reads HEHHSDHEHHSDHEHHSDHEH. Disordered regions lie at residues 96–174 and 190–245; these read HEHH…SASE and LETI…SRNT. Basic residues predominate over residues 117-132; that stretch reads HSHRNHAASGKNKRKA. Composition is skewed to basic and acidic residues over residues 133–147 and 155–167; these read LCPD…KDPR and HRSE…RNVK. Residues 206–215 show a composition bias toward polar residues; sequence VSSSTPPSVT. Over residues 227–237 the composition is skewed to basic and acidic residues; it reads KTNESVSEPRK. Residues Asn-229, Asn-254, and Asn-271 are each glycosylated (N-linked (GlcNAc...) asparagine). Residues 314–334 traverse the membrane as a helical segment; that stretch reads VGGFIAISIISFLSLLGVILV. Topologically, residues 335–343 are cytoplasmic; that stretch reads PLMNRVFFK. Residues 344 to 364 form a helical membrane-spanning segment; that stretch reads FLLSFLVALAVGTLSGDAFLH. The Extracellular segment spans residues 365 to 411; the sequence is LLPHSHASHHHSHSHEEPAMEMKRGPLFSHLSSQNIEESAYFDSTWK. The helical transmembrane segment at 412–432 threads the bilayer; it reads GLTALGGLYFMFLVEHVLTLI. The Cytoplasmic portion of the chain corresponds to 433–645; it reads KQFKDKKKKN…LKAGMTVKQA (213 aa). Positions 452-474 form a coiled coil; it reads VEIKKQLSKYESQLSTNEEKVDT. Ser-459 and Ser-466 each carry phosphoserine. A helical transmembrane segment spans residues 646–666; sequence VLYNALSAMLAYLGMATGIFI. The Extracellular segment spans residues 667–674; that stretch reads GHYAENVS. The N-linked (GlcNAc...) asparagine glycan is linked to Asn-672. Residues 675-695 traverse the membrane as a helical segment; sequence MWIFALTAGLFMYVALVDMVP. Residues 696-712 are Cytoplasmic-facing; sequence EMLHNDASDHGCSRWGY. Residues 713–733 form a helical membrane-spanning segment; that stretch reads FFLQNAGMLLGFGIMLLISIF. Over 734–743 the chain is Extracellular; the sequence is EHKIVFRINF.

The protein belongs to the ZIP transporter (TC 2.A.5) family. Interacts with SLC39A10; which triggers cells to undergo EMT and mitosis. Found in a complex with SLC39A6, SLC39A10 and with the 'Ser-727' phosphorylated form of STAT3 throughout mitosis. Found in a complex with SLC39A6, SLC39A10 and with NCAM1; this complex controls NCAM1 phosphorylation and integration into focal adhesion complexes during epithelial-to-mesenchymal transition (EMT). Found in a complex with SLC39A6, SLC39A10 and with GSK3B that controls NCAM1 phosphorylation. Cleaved on the N-terminus before locating to the plasma membrane. Post-translationally, N-glycosylated. In terms of processing, phosphorylated by ZAP70 in response to TCR stimulation leading to its activation.

The protein localises to the cell membrane. Its subcellular location is the cell projection. The protein resides in the lamellipodium membrane. It is found in the membrane raft. It localises to the apical cell membrane. It carries out the reaction Zn(2+)(in) = Zn(2+)(out). Zinc-influx transporter which plays a role in zinc homeostasis and in the induction of epithelial-to-mesenchymal transition (EMT). When associated with SLC39A10, the heterodimer formed by SLC39A10 and SLC39A6 mediates cellular zinc uptake to trigger cells to undergo epithelial- to-mesenchymal transition (EMT). The SLC39A10-SLC39A6 heterodimer also controls NCAM1 phosphorylation and its integration into focal adhesion complexes during EMT. Zinc influx inactivates GSK3B, enabling unphosphorylated SNAI1 in the nucleus to down-regulate adherence genes such as CDH1, causing loss of cell adherence. In addition, the SLC39A10-SLC39A6 heterodimer plays an essentiel role in initiating mitosis by importing zinc into cells to initiate a pathway resulting in the onset of mitosis. Participates in the T-cell receptor signaling regulation by mediating cellular zinc uptake into activated lymphocytes. Regulates the zinc influx necessary for proper meiotic progression to metaphase II (MII) that allows the oocyte-to-egg transition. This chain is Zinc transporter ZIP6, found in Pongo abelii (Sumatran orangutan).